We begin with the raw amino-acid sequence, 200 residues long: Pyridoxal 5'-phosphate synthase subunit PdxT (200 aa).

52–54 (GES) contacts L-glutamine. Cysteine 84 (nucleophile) is an active-site residue. L-glutamine-binding positions include arginine 116 and 145-146 (IR). Residues histidine 181 and glutamate 183 each act as charge relay system in the active site.

Belongs to the glutaminase PdxT/SNO family. In the presence of PdxS, forms a dodecamer of heterodimers. Only shows activity in the heterodimer.

It catalyses the reaction aldehydo-D-ribose 5-phosphate + D-glyceraldehyde 3-phosphate + L-glutamine = pyridoxal 5'-phosphate + L-glutamate + phosphate + 3 H2O + H(+). The catalysed reaction is L-glutamine + H2O = L-glutamate + NH4(+). It functions in the pathway cofactor biosynthesis; pyridoxal 5'-phosphate biosynthesis. In terms of biological role, catalyzes the hydrolysis of glutamine to glutamate and ammonia as part of the biosynthesis of pyridoxal 5'-phosphate. The resulting ammonia molecule is channeled to the active site of PdxS. The sequence is that of Pyridoxal 5'-phosphate synthase subunit PdxT from Saccharolobus islandicus (strain Y.G.57.14 / Yellowstone #1) (Sulfolobus islandicus).